The chain runs to 85 residues: Small ribosomal subunit protein uS17 (85 aa).

The protein belongs to the universal ribosomal protein uS17 family. In terms of assembly, part of the 30S ribosomal subunit.

Functionally, one of the primary rRNA binding proteins, it binds specifically to the 5'-end of 16S ribosomal RNA. The polypeptide is Small ribosomal subunit protein uS17 (Citrifermentans bemidjiense (strain ATCC BAA-1014 / DSM 16622 / JCM 12645 / Bem) (Geobacter bemidjiensis)).